We begin with the raw amino-acid sequence, 345 residues long: 3'-5' exoribonuclease 1 (345 aa).

Basic and acidic residues-rich tracts occupy residues 1–11 and 19–46; these read MEDERGRERGG and PRPE…ETDG. Residues 1–50 form a disordered region; sequence MEDERGRERGGDAAQQKTPRPECEESRPLSVEKKQRCRLDGKETDGSKFI. 2 positions are modified to phosphoserine: Ser-55 and Ser-58. The SAP domain occupies 72–106; the sequence is INRMSKEELRAKLSEFKLETRGVKDVLKKRLKNYY. Residues 126-302 enclose the Exonuclease domain; sequence ICIIDFEATC…DDSKNIARIA (177 aa). Mg(2+) contacts are provided by Asp-130 and Glu-132. Glu-132 (proton acceptor) is an active-site residue. Residues Glu-132 and Ala-133 each coordinate AMP. Position 230 (Asp-230) interacts with Mg(2+). His-289 acts as the Proton acceptor in catalysis. His-289 provides a ligand contact to AMP. Position 294 (Asp-294) interacts with Mg(2+).

Identified in a histone pre-mRNA complex, at least composed of ERI1, LSM11, SLBP, SNRPB, SYNCRIP and YBX1. Binds to 40S and 60S ribosomal subunits and to 80S assembled ribosomes. Interacts in a cooperative manner with SLBP to the mature 3'-end of histone mRNAs. Found in a ternary complex with SLBP and the stem-loop structure of the 3'-end of histone mRNAs. Mg(2+) serves as cofactor. In terms of tissue distribution, widely expressed with high levels in spleen, thymus and testis (at protein level).

The protein resides in the cytoplasm. It is found in the nucleus. It localises to the nucleolus. The enzyme catalyses Exonucleolytic cleavage in the 3'- to 5'-direction to yield nucleoside 5'-phosphates.. Although it can bind simultaneously with SLBP to the 3'-end of histone mRNA, the presence of SLBP prevents the exonuclease activity. In terms of biological role, RNA exonuclease that binds to the 3'-end of histone mRNAs and degrades them, suggesting that it plays an essential role in histone mRNA decay after replication. A 2' and 3'-hydroxyl groups at the last nucleotide of the histone 3'-end is required for efficient 3'-end histone mRNA exonuclease activity and degradation of RNA substrates. Also able to degrade the 3'-overhangs of short interfering RNAs (siRNAs) in vitro, suggesting a possible role as regulator of RNA interference (RNAi). Required for binding the 5'-ACCCA-3' sequence present in stem-loop structure. Able to bind other mRNAs. Required for 5.8S rRNA 3'-end processing. Also binds to 5.8s ribosomal RNA. Binds with high affinity to the stem-loop structure of replication-dependent histone pre-mRNAs. In vitro, does not have sequence specificity. In vitro, has weak DNA exonuclease activity. In vitro, shows biphasic kinetics such that there is rapid hydrolysis of the last three unpaired RNA nucleotides in the 39 flanking sequence followed by a much slower cleavage through the stem that occurs over a longer incubation period in the order of hours. ERI1-mediated RNA metabolism plays a key role in chondrogenesis. This is 3'-5' exoribonuclease 1 (Eri1) from Mus musculus (Mouse).